The primary structure comprises 101 residues: Small ribosomal subunit protein uS14 (101 aa).

This sequence belongs to the universal ribosomal protein uS14 family. In terms of assembly, part of the 30S ribosomal subunit. Contacts proteins S3 and S10.

Functionally, binds 16S rRNA, required for the assembly of 30S particles and may also be responsible for determining the conformation of the 16S rRNA at the A site. This Cronobacter sakazakii (strain ATCC BAA-894) (Enterobacter sakazakii) protein is Small ribosomal subunit protein uS14.